A 583-amino-acid polypeptide reads, in one-letter code: Bifunctional lycopene cyclase/phytoene synthase (583 aa).

The segment at 1-243 (MGFDYALVHL…IVFGQLAFDN (243 aa)) is lycopene beta-cyclase. Transmembrane regions (helical) follow at residues 3-23 (FDYALVHLKYTIPPAVLLTWL), 35-55 (KVGYLVSIAVASTIPWDSYLI), 75-97 (IPLEEVFFFIIQTYNTSLLYLLL), 120-140 (YMRLAGQVFFLALIAWGWRCI), 151-171 (LILVWAGPFLLMLWSLAYQFI), 173-193 (ALPVTNTALPIFLPTLYLWVV), and 221-241 (IEEALFFLATNALIVFGQLAF). A phytoene synthase region spans residues 250–583 (TFPHLFTGPS…MVAWRTLNSK (334 aa)).

The protein in the N-terminal section; belongs to the lycopene beta-cyclase family. This sequence in the C-terminal section; belongs to the phytoene/squalene synthase family.

The protein resides in the membrane. It catalyses the reaction all-trans-lycopene = gamma-carotene. The enzyme catalyses gamma-carotene = all-trans-beta-carotene. It carries out the reaction 2 (2E,6E,10E)-geranylgeranyl diphosphate = 15-cis-phytoene + 2 diphosphate. It functions in the pathway carotenoid biosynthesis; beta-carotene biosynthesis. It participates in carotenoid biosynthesis; phytoene biosynthesis; all-trans-phytoene from geranylgeranyl diphosphate: step 1/1. Functionally, bifunctional enzyme that catalyzes the reactions from geranylgeranyl diphosphate to phytoene (phytoene synthase) and lycopene to beta-carotene via the intermediate gamma-carotene (lycopene cyclase). The protein is Bifunctional lycopene cyclase/phytoene synthase of Pyrenophora tritici-repentis (strain Pt-1C-BFP) (Wheat tan spot fungus).